The chain runs to 487 residues: NAD(+)--arginine ADP-ribosyltransferase EFV (487 aa).

Positions S2–L51 form a coiled coil. The region spanning L315–G487 is the TR mART core domain. NAD(+) is bound by residues T346–R358 and R394–E400. Residues R394, S415, and E463 contribute to the active site. E463 contacts NAD(+).

Its subcellular location is the secreted. The enzyme catalyses L-arginyl-[protein] + NAD(+) = N(omega)-(ADP-D-ribosyl)-L-arginyl-[protein] + nicotinamide + H(+). Its function is as follows. A probable mono(ADP-ribosyl)transferase, it may ADP-ribosylate Arg in target protein(s). Upon expression in yeast cells causes cell death. This is NAD(+)--arginine ADP-ribosyltransferase EFV from Enterococcus faecalis (strain ATCC 700802 / V583).